Reading from the N-terminus, the 229-residue chain is Octanoyltransferase (229 aa).

Positions 30-223 (PDTPDTIWLV…QLQQRAQAHP (194 aa)) constitute a BPL/LPL catalytic domain. Substrate-binding positions include 69–76 (RGGQITYH), 141–143 (ALG), and 154–156 (GVS). The active-site Acyl-thioester intermediate is C172.

The protein belongs to the LipB family.

It is found in the cytoplasm. The catalysed reaction is octanoyl-[ACP] + L-lysyl-[protein] = N(6)-octanoyl-L-lysyl-[protein] + holo-[ACP] + H(+). It functions in the pathway protein modification; protein lipoylation via endogenous pathway; protein N(6)-(lipoyl)lysine from octanoyl-[acyl-carrier-protein]: step 1/2. Functionally, catalyzes the transfer of endogenously produced octanoic acid from octanoyl-acyl-carrier-protein onto the lipoyl domains of lipoate-dependent enzymes. Lipoyl-ACP can also act as a substrate although octanoyl-ACP is likely to be the physiological substrate. The sequence is that of Octanoyltransferase from Ralstonia pickettii (strain 12J).